The sequence spans 240 residues: Phosphatidylserine decarboxylase proenzyme (240 aa).

The active-site Schiff-base intermediate with substrate; via pyruvic acid is the Ser198. At Ser198 the chain carries Pyruvic acid (Ser); by autocatalysis.

It belongs to the phosphatidylserine decarboxylase family. PSD-A subfamily. In terms of assembly, heterodimer of a large membrane-associated beta subunit and a small pyruvoyl-containing alpha subunit. The cofactor is pyruvate. Is synthesized initially as an inactive proenzyme. Formation of the active enzyme involves a self-maturation process in which the active site pyruvoyl group is generated from an internal serine residue via an autocatalytic post-translational modification. Two non-identical subunits are generated from the proenzyme in this reaction, and the pyruvate is formed at the N-terminus of the alpha chain, which is derived from the carboxyl end of the proenzyme. The post-translation cleavage follows an unusual pathway, termed non-hydrolytic serinolysis, in which the side chain hydroxyl group of the serine supplies its oxygen atom to form the C-terminus of the beta chain, while the remainder of the serine residue undergoes an oxidative deamination to produce ammonia and the pyruvoyl prosthetic group on the alpha chain.

The protein resides in the cell membrane. The catalysed reaction is a 1,2-diacyl-sn-glycero-3-phospho-L-serine + H(+) = a 1,2-diacyl-sn-glycero-3-phosphoethanolamine + CO2. The protein operates within phospholipid metabolism; phosphatidylethanolamine biosynthesis; phosphatidylethanolamine from CDP-diacylglycerol: step 2/2. Its function is as follows. Catalyzes the formation of phosphatidylethanolamine (PtdEtn) from phosphatidylserine (PtdSer). In Paramagnetospirillum magneticum (strain ATCC 700264 / AMB-1) (Magnetospirillum magneticum), this protein is Phosphatidylserine decarboxylase proenzyme.